A 462-amino-acid chain; its full sequence is Glycoprotein endo-alpha-1,2-mannosidase (462 aa).

The Cytoplasmic portion of the chain corresponds to 1–8; that stretch reads MAKFRRRT. Residues 9–29 form a helical; Signal-anchor for type II membrane protein membrane-spanning segment; that stretch reads CIILALFILFIFSLMMGLKML. Residues 30–462 lie on the Lumenal side of the membrane; it reads RPNTATFGAP…YALDRQLPVS (433 aa). Positions 60–462 are catalytic; that stretch reads DFQKSDRINS…YALDRQLPVS (403 aa).

It belongs to the glycosyl hydrolase 99 family. Undergoes proteolytic cleavage in the C-terminal region. In terms of tissue distribution, highly expressed in the liver and kidney. Expressed at lower levels in muscle, pancreas, heart, placenta, lung and brain.

The protein localises to the golgi apparatus membrane. The catalysed reaction is N-{alpha-Glc-(1-&gt;3)-alpha-Man-(1-&gt;2)-alpha-Man-(1-&gt;2)-alpha-Man-(1-&gt;3)-[alpha-Man-(1-&gt;2)-alpha-Man-(1-&gt;3)-[alpha-Man-(1-&gt;2)-alpha-Man-(1-&gt;6)]-alpha-Man-(1-&gt;6)]-beta-Man-(1-&gt;4)-beta-GlcNAc-(1-&gt;4)-beta-GlcNAc}-L-asparaginyl-[protein] + H2O = alpha-D-glucosyl-(1-&gt;3)-D-mannopyranose + N(4)-{alpha-D-Man-(1-&gt;2)-alpha-D-Man-(1-&gt;3)-[alpha-D-Man-(1-&gt;2)-alpha-D-Man-(1-&gt;3)-[alpha-D-Man-(1-&gt;2)-alpha-D-Man-(1-&gt;6)]-alpha-D-Man-(1-&gt;6)]-beta-D-Man-(1-&gt;4)-beta-D-GlaNAc-(1-&gt;4)-beta-D-GlcNAc}-L-asparaginyl-[protein] (N-glucan mannose isomer 8A1,2,3B1,2). The protein is Glycoprotein endo-alpha-1,2-mannosidase (MANEA) of Homo sapiens (Human).